We begin with the raw amino-acid sequence, 337 residues long: Glycine N(alpha)-acyltransferase (337 aa).

Belongs to the acetyltransferase family.

The catalysed reaction is a (3R)-hydroxyacyl-[ACP] + glycine = a lyso-glycine lipid + holo-[ACP] + H(+). It catalyses the reaction (3R)-hydroxyhexadecanoyl-[ACP] + glycine = N-[(3R)-3-hydroxyhexadecanoyl]-glycine + holo-[ACP] + H(+). It participates in lipid metabolism. In terms of biological role, is involved in the production of glycine lipids (GL), which are phosphorus-free membrane lipids important for fitness during growth of the human gut bacterium B.thetaiotaomicron in vivo and in vitro. Catalyzes the first step of GL biosynthesis, i.e. the N-acylation of glycine via addition of a 3-hydroxy fatty acyl group, to form a range of monoacylated glycine (also named lyso-glycine lipids or lyso-GL). Is important for the ability of B.thetaiotaomicron to adapt to stress and colonize the mammalian gut. Also seems to be required for the production of flavolipin, an acylated serine-glycine dipeptide. The chain is Glycine N(alpha)-acyltransferase from Bacteroides thetaiotaomicron (strain ATCC 29148 / DSM 2079 / JCM 5827 / CCUG 10774 / NCTC 10582 / VPI-5482 / E50).